Consider the following 242-residue polypeptide: ATP synthase subunit 4, mitochondrial (242 aa).

The transit peptide at 1–35 directs the protein to the mitochondrion; that stretch reads MSFRALTMRSAVARTALNNTIRSARVATPYLGIRH.

It belongs to the eukaryotic ATPase B chain family. In terms of assembly, F-type ATPases have 2 components, CF(1) - the catalytic core - and CF(0) - the membrane proton channel. In yeast, the dimeric form of ATP synthase consists of 17 polypeptides: alpha, beta, gamma, delta, epsilon, 4 (B), 5 (OSCP), 6 (A), 8, 9 (C), d, E (Tim11), f, g, h, i/j and k.

The protein resides in the mitochondrion. It localises to the mitochondrion inner membrane. In terms of biological role, mitochondrial membrane ATP synthase (F(1)F(0) ATP synthase or Complex V) produces ATP from ADP in the presence of a proton gradient across the membrane which is generated by electron transport complexes of the respiratory chain. F-type ATPases consist of two structural domains, F(1) - containing the extramembraneous catalytic core, and F(0) - containing the membrane proton channel, linked together by a central stalk and a peripheral stalk. During catalysis, ATP synthesis in the catalytic domain of F(1) is coupled via a rotary mechanism of the central stalk subunits to proton translocation. Part of the complex F(0) domain and the peripheric stalk, which acts as a stator to hold the catalytic alpha(3)beta(3) subcomplex and subunit a/ATP6 static relative to the rotary elements. The chain is ATP synthase subunit 4, mitochondrial (ATP4) from Candida glabrata (strain ATCC 2001 / BCRC 20586 / JCM 3761 / NBRC 0622 / NRRL Y-65 / CBS 138) (Yeast).